Consider the following 309-residue polypeptide: MAASVRMYRAVGELGLASILSPARMAAPVLVMPVRTKKRYFIPPAVGAKQRTMDDMIKKARAAGVVTPQETMERPINIACTAGILDPYVPPEGDARLSSLSKEGLKQRTQQLKQTAASQLAIRKVKEYDSEFTTKTFPEKAQEIFITAHKYLTNFDRHKLHTLVTERCYPEMVRGNRYRTIRWSFVESIEAPRVVQVRCPEMVSKGNLYAQVTVRMHNKQTLIVYDRFGRVMCGSEEPRDVLEYVVFERHMVNPYGTWRMHGKIVPSWAPPKEPIVKTVLLPGQQLKPCQELDDISFEKAEPVPQQWYK.

The protein belongs to the mitochondrion-specific ribosomal protein mL45 family. As to quaternary structure, component of the mitochondrial ribosome large subunit (39S) which comprises a 16S rRNA and about 50 distinct proteins.

It localises to the mitochondrion. Functionally, component of the mitochondrial large ribosomal subunit (mt-LSU). Within the mitochondrial ribosomes, required to direct the nascent polypeptide toward the tunnel exit and position the exit at a distance from the membrane surface. In Xenopus laevis (African clawed frog), this protein is Large ribosomal subunit protein mL45 (mrpl45).